The sequence spans 566 residues: Arginine--tRNA ligase (566 aa).

The 'HIGH' region signature appears at Ala129–His139.

It belongs to the class-I aminoacyl-tRNA synthetase family. In terms of assembly, monomer.

The protein localises to the cytoplasm. The catalysed reaction is tRNA(Arg) + L-arginine + ATP = L-arginyl-tRNA(Arg) + AMP + diphosphate. The chain is Arginine--tRNA ligase from Wolbachia pipientis subsp. Culex pipiens (strain wPip).